Reading from the N-terminus, the 255-residue chain is Small ribosomal subunit protein uS2 (255 aa).

The protein belongs to the universal ribosomal protein uS2 family.

The protein is Small ribosomal subunit protein uS2 of Streptococcus pyogenes serotype M28 (strain MGAS6180).